A 336-amino-acid polypeptide reads, in one-letter code: Probable allantoicase (336 aa).

Belongs to the allantoicase family.

The enzyme catalyses allantoate + H2O = (S)-ureidoglycolate + urea. It functions in the pathway nitrogen metabolism; (S)-allantoin degradation; (S)-ureidoglycolate from allantoate (aminidohydrolase route): step 1/1. This Acinetobacter baumannii (strain ACICU) protein is Probable allantoicase.